Reading from the N-terminus, the 558-residue chain is uncharacterized protein (558 aa).

Residues 338–354 (STSTSTSTSTSSSNDLN) show a composition bias toward low complexity. A disordered region spans residues 338–380 (STSTSTSTSTSSSNDLNLDSDSDDSDSDDSDSDSDSDSDSEID). Over residues 355 to 380 (LDSDSDDSDSDDSDSDSDSDSDSEID) the composition is skewed to acidic residues.

The protein localises to the plastid. This is an uncharacterized protein from Euglena longa (Euglenophycean alga).